The sequence spans 48 residues: uncharacterized protein (48 aa).

The chain crosses the membrane as a helical span at residues 21 to 43 (SIFVSLGVFAVSVAILKSRLGNF).

It localises to the membrane. This is an uncharacterized protein from Schizosaccharomyces pombe (strain 972 / ATCC 24843) (Fission yeast).